The sequence spans 458 residues: UPF0210 protein MMP1427 (458 aa).

This sequence belongs to the UPF0210 family.

This is UPF0210 protein MMP1427 from Methanococcus maripaludis (strain DSM 14266 / JCM 13030 / NBRC 101832 / S2 / LL).